The following is a 448-amino-acid chain: Proton extrusion protein PxcA (448 aa).

4 consecutive transmembrane segments (helical) span residues 231–251 (ILLL…FFLI), 323–343 (IDSI…VLVL), 372–392 (LIIL…WEVI), and 408–428 (FNFL…KYWI).

This sequence belongs to the CemA family.

Its subcellular location is the cell inner membrane. Required for H(+) efflux immediately after light irradiation to form a rapid H(+) concentration gradient across the thylakoid membranes. Together with PxcL, contributes to transient H(+) uptake following dark to light transition. The sequence is that of Proton extrusion protein PxcA from Rippkaea orientalis (strain PCC 8801 / RF-1) (Cyanothece sp. (strain PCC 8801)).